The following is a 160-amino-acid chain: 2-C-methyl-D-erythritol 2,4-cyclodiphosphate synthase (160 aa).

Asp11 and His13 together coordinate a divalent metal cation. 4-CDP-2-C-methyl-D-erythritol 2-phosphate is bound by residues 11–13 and 37–38; these read DVH and HS. His45 contacts a divalent metal cation. Residues 59–61 and Arg145 each bind 4-CDP-2-C-methyl-D-erythritol 2-phosphate; that span reads DIG.

It belongs to the IspF family. As to quaternary structure, homotrimer. A divalent metal cation serves as cofactor.

It carries out the reaction 4-CDP-2-C-methyl-D-erythritol 2-phosphate = 2-C-methyl-D-erythritol 2,4-cyclic diphosphate + CMP. It functions in the pathway isoprenoid biosynthesis; isopentenyl diphosphate biosynthesis via DXP pathway; isopentenyl diphosphate from 1-deoxy-D-xylulose 5-phosphate: step 4/6. Its function is as follows. Involved in the biosynthesis of isopentenyl diphosphate (IPP) and dimethylallyl diphosphate (DMAPP), two major building blocks of isoprenoid compounds. Catalyzes the conversion of 4-diphosphocytidyl-2-C-methyl-D-erythritol 2-phosphate (CDP-ME2P) to 2-C-methyl-D-erythritol 2,4-cyclodiphosphate (ME-CPP) with a corresponding release of cytidine 5-monophosphate (CMP). The protein is 2-C-methyl-D-erythritol 2,4-cyclodiphosphate synthase of Neisseria meningitidis serogroup B (strain ATCC BAA-335 / MC58).